The primary structure comprises 219 residues: Ribosomal RNA small subunit methyltransferase G (219 aa).

Residues Gly-78, Phe-83, 129-130 (GE), and Arg-146 contribute to the S-adenosyl-L-methionine site.

Belongs to the methyltransferase superfamily. RNA methyltransferase RsmG family.

It is found in the cytoplasm. It catalyses the reaction guanosine(527) in 16S rRNA + S-adenosyl-L-methionine = N(7)-methylguanosine(527) in 16S rRNA + S-adenosyl-L-homocysteine. In terms of biological role, specifically methylates the N7 position of guanine in position 527 of 16S rRNA. This is Ribosomal RNA small subunit methyltransferase G from Geotalea uraniireducens (strain Rf4) (Geobacter uraniireducens).